The sequence spans 123 residues: Ribosome-binding factor A (123 aa).

This sequence belongs to the RbfA family. Monomer. Binds 30S ribosomal subunits, but not 50S ribosomal subunits or 70S ribosomes.

It is found in the cytoplasm. Functionally, one of several proteins that assist in the late maturation steps of the functional core of the 30S ribosomal subunit. Associates with free 30S ribosomal subunits (but not with 30S subunits that are part of 70S ribosomes or polysomes). Required for efficient processing of 16S rRNA. May interact with the 5'-terminal helix region of 16S rRNA. This chain is Ribosome-binding factor A, found in Chlamydia trachomatis serovar L2 (strain ATCC VR-902B / DSM 19102 / 434/Bu).